A 146-amino-acid chain; its full sequence is Cyanate hydratase (146 aa).

Active-site residues include R87, E90, and S113.

It belongs to the cyanase family.

It carries out the reaction cyanate + hydrogencarbonate + 3 H(+) = NH4(+) + 2 CO2. Catalyzes the reaction of cyanate with bicarbonate to produce ammonia and carbon dioxide. The sequence is that of Cyanate hydratase from Synechococcus elongatus (strain ATCC 33912 / PCC 7942 / FACHB-805) (Anacystis nidulans R2).